Reading from the N-terminus, the 483-residue chain is UDP-N-acetylmuramoylalanine--D-glutamate ligase (483 aa).

Glycine 119–threonine 125 contacts ATP.

It belongs to the MurCDEF family.

It is found in the cytoplasm. It carries out the reaction UDP-N-acetyl-alpha-D-muramoyl-L-alanine + D-glutamate + ATP = UDP-N-acetyl-alpha-D-muramoyl-L-alanyl-D-glutamate + ADP + phosphate + H(+). It participates in cell wall biogenesis; peptidoglycan biosynthesis. Its function is as follows. Cell wall formation. Catalyzes the addition of glutamate to the nucleotide precursor UDP-N-acetylmuramoyl-L-alanine (UMA). This Mycolicibacterium vanbaalenii (strain DSM 7251 / JCM 13017 / BCRC 16820 / KCTC 9966 / NRRL B-24157 / PYR-1) (Mycobacterium vanbaalenii) protein is UDP-N-acetylmuramoylalanine--D-glutamate ligase.